A 306-amino-acid chain; its full sequence is ADP,ATP carrier protein ER-ANT1 (306 aa).

Solcar repeat units lie at residues 8-101 (ERFS…FKNL), 113-205 (KWFA…IKPI), and 213-299 (GNFL…LHQI). Transmembrane regions (helical) follow at residues 10 to 37 (FSAD…VKLL), 78 to 102 (QANV…KNLL), 111 to 131 (YLKW…TTSL), 181 to 202 (FGVS…YDTI), and 216 to 236 (LASF…AYPF). ADP contacts are provided by arginine 83 and lysine 95. Arginine 240 serves as a coordination point for ADP. The interval 240 to 245 (RRRMML) is important for transport activity. Positions 240 to 245 (RRRMML) match the Nucleotide carrier signature motif motif. Residues 276–296 (VTANMLLGVAGAGVLAGYDQL) form a helical membrane-spanning segment.

This sequence belongs to the mitochondrial carrier (TC 2.A.29) family.

Its subcellular location is the endoplasmic reticulum membrane. It carries out the reaction ADP(in) + ATP(out) = ADP(out) + ATP(in). Functionally, ADP:ATP antiporter that catalyzes the exchange of ADP and ATP across the endoplasmic reticulum membrane. The sequence is that of ADP,ATP carrier protein ER-ANT1 (ER-ANT1) from Arabidopsis thaliana (Mouse-ear cress).